Reading from the N-terminus, the 764-residue chain is MTTAHILGFPRIGAQRELKFALERYWRDGASADAERALVDTGRALRAEHWRIERDAGLDCVTVGDFAWYDHVLTTLAHVGGLPRRFGFDARALTLADYFAAARGNAAQPAMEMTKWFDTNYHYLVPEYSPATTFGPGVEWLFDEVREARALGYRAKAALVGPLTLLWLGKARDGLVERLALLPRLVPAYRALLARLREAGVDWVQIEEPIFSLDLPDAWRDAARPTYEALAPGAPKLLVATYFDDASEHAALLKALPVAGLHIDLVRADAQLDAFVADYPADKVLSCGIVDGRNVWRNDLDRSLARLAPVRDALGERLWVATSCSLLHVPVDLAHEPRLDEELKTWLAFAAQKTREVAALRDALVKGRAAVAAEFDDAAAAAAARRTSARIHNPLVKRRVAALTDADARRASAYSVRAAAQRARFGLPLLPTTTIGSFPQTPEIRRARAAFKQGVLDHLGYLEAMREQVRIAIDKQLAYGLDVLVHGEAERNDMVEYFGELLWGFAITSNGWVQSYGSRCVKPPLVYGDVYLPEPMTVGWASYAQSLSAKPVKGMLTGPVTMLQWSFVRDDQPRATTALQIALALRQETLDLEKAGIGMIQIDEPALREGLPLKARERAAYLDWAVRAFGIAASGVADDTQIHTHMCYSEFGDILPSIAALDADVISIETTRSNMELLDAFETFDYPNEIGPGVYDIHSPRVPDADEIERLILLALERIPAQRLWVNPDCGLKTREWRQVDAALAAMVDAAKRVRQKVEEEAPA.

5-methyltetrahydropteroyltri-L-glutamate contacts are provided by residues 16–19 (RELK) and Lys-115. L-homocysteine contacts are provided by residues 435 to 437 (IGS) and Glu-488. L-methionine is bound by residues 435–437 (IGS) and Glu-488. 5-methyltetrahydropteroyltri-L-glutamate contacts are provided by residues 519 to 520 (RC) and Trp-565. Asp-603 contributes to the L-homocysteine binding site. Residue Asp-603 coordinates L-methionine. Position 609 (Glu-609) interacts with 5-methyltetrahydropteroyltri-L-glutamate. Residues His-645, Cys-647, and Glu-669 each contribute to the Zn(2+) site. His-698 acts as the Proton donor in catalysis. A Zn(2+)-binding site is contributed by Cys-730.

It belongs to the vitamin-B12 independent methionine synthase family. Zn(2+) is required as a cofactor.

It catalyses the reaction 5-methyltetrahydropteroyltri-L-glutamate + L-homocysteine = tetrahydropteroyltri-L-glutamate + L-methionine. It participates in amino-acid biosynthesis; L-methionine biosynthesis via de novo pathway; L-methionine from L-homocysteine (MetE route): step 1/1. Functionally, catalyzes the transfer of a methyl group from 5-methyltetrahydrofolate to homocysteine resulting in methionine formation. In Burkholderia pseudomallei (strain K96243), this protein is 5-methyltetrahydropteroyltriglutamate--homocysteine methyltransferase.